The primary structure comprises 458 residues: Monomethylamine methyltransferase MtmB (458 aa).

O202 is a non-standard amino acid (pyrrolysine).

The protein belongs to the monomethylamine methyltransferase family. Can form a complex with MtmC.

It catalyses the reaction Co(I)-[methylamine-specific corrinoid protein] + methylamine + H(+) = methyl-Co(III)-[methylamine-specific corrinoid protein] + NH4(+). It functions in the pathway one-carbon metabolism; methanogenesis from methylamine. Catalyzes the transfer of the methyl group from monomethylamine to the corrinoid cofactor of MtmC. This is Monomethylamine methyltransferase MtmB (mtmB1) from Methanosarcina mazei (strain ATCC BAA-159 / DSM 3647 / Goe1 / Go1 / JCM 11833 / OCM 88) (Methanosarcina frisia).